A 422-amino-acid polypeptide reads, in one-letter code: Glucose-1-phosphate adenylyltransferase (422 aa).

Alpha-D-glucose 1-phosphate-binding positions include Tyr110, Gly175, 190–191, and Ser208; that span reads EK.

This sequence belongs to the bacterial/plant glucose-1-phosphate adenylyltransferase family. In terms of assembly, homotetramer.

The catalysed reaction is alpha-D-glucose 1-phosphate + ATP + H(+) = ADP-alpha-D-glucose + diphosphate. The protein operates within glycan biosynthesis; glycogen biosynthesis. Involved in the biosynthesis of ADP-glucose, a building block required for the elongation reactions to produce glycogen. Catalyzes the reaction between ATP and alpha-D-glucose 1-phosphate (G1P) to produce pyrophosphate and ADP-Glc. In Hydrogenovibrio crunogenus (strain DSM 25203 / XCL-2) (Thiomicrospira crunogena), this protein is Glucose-1-phosphate adenylyltransferase.